The following is a 1985-amino-acid chain: Histone-lysine N-methyltransferase SETD1B (1985 aa).

Basic residues predominate over residues 1–11 (MENSHPHHHHQ). The interval 1–25 (MENSHPHHHHQQPPPQPGPSGERRN) is disordered. An interaction with WDR82 region spans residues 67 to 97 (VEDPRVVGIWTKNKELELSVPKFKIDEFYVG). Positions 92-180 (DEFYVGPVPP…NIIHVELDTK (89 aa)) constitute an RRM domain. Disordered regions lie at residues 234-304 (GCGS…QDPT), 353-710 (GSSG…PPPA), 955-1480 (VKRK…RTGP), 1519-1624 (QLPP…STKL), and 1658-1687 (RGPWRRPPKKRHEDLVAPSASPEPSPPQPL). Polar residues-rich tracts occupy residues 242–258 (VTPNSGGTPFSQDTAYS), 264–273 (TPNSYGQGTP), 281–304 (PFSQDSSYSSRQPTPSYLFSQDPT), and 353–365 (GSSGTPFKAQSQD). Low complexity predominate over residues 366-381 (ATTFAHTPPPAQTATA). Composition is skewed to pro residues over residues 393–404 (TPAPPFPPPPEE), 423–433 (PAPPPLPPAEP), and 440–449 (GTPPGPPPPD). Positions 484–512 (EKPHDSLDSRIEMLLKEQRTKLPFLREQD) are enriched in basic and acidic residues. Low complexity predominate over residues 522–535 (SPISSSSSQLSPLS). The segment covering 583-594 (PRPPPEPGPPDP) has biased composition (pro residues). Acidic residues predominate over residues 628-637 (EDMEISDDEM). The span at 650–669 (PMVVTPGAGAVAAPNVLAPN) shows a compositional bias: low complexity. Positions 670-710 (LPLPPPPGFPPLPPPPPPPPPQPGFPMPPPLPPPPPPPPPA) are enriched in pro residues. Phosphoserine is present on residues serine 977 and serine 985. Basic and acidic residues predominate over residues 986–1006 (ERERDRDIADAPCELTKRDPK). Serine 1022 is subject to Phosphoserine. A compositionally biased stretch (low complexity) spans 1032-1055 (LSASSSSSASSSSGSSTTSPSSSA). A compositionally biased stretch (acidic residues) spans 1058–1083 (KEEEDRESTEEEEEEEEEEAEEEEEE). A compositionally biased stretch (low complexity) spans 1087–1097 (SRISSPSSSSS). Residues 1100–1120 (KDDEDDNEADSDGQIDSDIDD) show a composition bias toward acidic residues. The span at 1143–1178 (SITTSKAPAESSSSSSESSGSSEFESSSESESSSSS) shows a compositional bias: low complexity. The segment covering 1179–1202 (SEDEEEMTVPGVEEEEEEEEEEEK) has biased composition (acidic residues). Residues 1205–1217 (AMAAATVVAMAEE) show a composition bias toward low complexity. Residues 1247–1261 (GTEEEVDIEAEDEVP) are compositionally biased toward acidic residues. Residues serine 1283, serine 1301, and serine 1354 each carry the phosphoserine modification. Over residues 1331 to 1373 (EPPPMLSLPLQPPLPPPRLLRPPSPPPEPETPEPPKPPVPLEP) the composition is skewed to pro residues. Residues 1402–1442 (PGGEPPLSGSSSGLSLSSPQVPGSPFSYPSPSPGLSSGGLP) show a composition bias toward low complexity. Over residues 1535-1544 (IKRKPGRPRR) the composition is skewed to basic residues. Composition is skewed to pro residues over residues 1600 to 1619 (PAPPPPLPPQPPPPPPPPPV) and 1678 to 1687 (SPEPSPPQPL). Phosphoserine is present on residues serine 1678 and serine 1682. The WDR5 interaction motif (WIN) motif lies at 1764-1769 (GCARSE). The segment at 1786 to 1819 (SRASTDEPPMDTQGMSIPAQPHASTRAGSERRSE) is disordered. The RxxxRR motif signature appears at 1817–1822 (RSEQRR). In terms of domain architecture, SET spans 1846-1963 (KKLKFCKSHI…VNEEITYDYK (118 aa)). Tyrosine 1962 lines the S-adenosyl-L-methionine pocket. The 17-residue stretch at 1969–1985 (VKIPCLCGSENCRGTLN) folds into the Post-SET domain.

This sequence belongs to the class V-like SAM-binding methyltransferase superfamily. As to quaternary structure, component of the SET1B/COMPASS complex composed of the catalytic subunit SETD1B, WDR5, WDR82, RBBP5, ASH2L/ASH2, CXXC1/CFP1, HCFC1, DPY30 homotrimer and BOD1. Forms a core complex with the evolutionary conserved subcomplex WRAD composed of WDR5, RBBP5, ASH2L/ASH2 and DPY30 subunits; WRAD differentially stimulates the methyltransferase activity. Interacts with HCFC1 and ASH2L/ASH2. Interacts (via the RRM domain) with WDR82. Interacts (via the RRM domain) with hyperphosphorylated C-terminal domain (CTD) of RNA polymerase II large subunit (POLR2A) only in the presence of WDR82. Binds specifically to CTD heptad repeats phosphorylated on 'Ser-5' of each heptad. Interacts with RBM15. Interacts (via WIN motif) with WDR5. In terms of tissue distribution, widely expressed.

It is found in the nucleus. The protein resides in the nucleus speckle. The protein localises to the chromosome. It localises to the cytoplasm. The catalysed reaction is L-lysyl(4)-[histone H3] + S-adenosyl-L-methionine = N(6)-methyl-L-lysyl(4)-[histone H3] + S-adenosyl-L-homocysteine + H(+). It carries out the reaction N(6)-methyl-L-lysyl(4)-[histone H3] + S-adenosyl-L-methionine = N(6),N(6)-dimethyl-L-lysyl(4)-[histone H3] + S-adenosyl-L-homocysteine + H(+). It catalyses the reaction N(6),N(6)-dimethyl-L-lysyl(4)-[histone H3] + S-adenosyl-L-methionine = N(6),N(6),N(6)-trimethyl-L-lysyl(4)-[histone H3] + S-adenosyl-L-homocysteine + H(+). Functionally, histone methyltransferase that catalyzes methyl group transfer from S-adenosyl-L-methionine to the epsilon-amino group of 'Lys-4' of histone H3 (H3K4) via a non-processive mechanism. Part of chromatin remodeling machinery, forms H3K4me1, H3K4me2 and H3K4me3 methylation marks at active chromatin sites where transcription and DNA repair take place. Plays an essential role in regulating the transcriptional programming of multipotent hematopoietic progenitor cells and lymphoid lineage specification during hematopoiesis. This is Histone-lysine N-methyltransferase SETD1B (Setd1b) from Mus musculus (Mouse).